The sequence spans 365 residues: Flagellar P-ring protein (365 aa).

The signal sequence occupies residues methionine 1 to alanine 19.

It belongs to the FlgI family. As to quaternary structure, the basal body constitutes a major portion of the flagellar organelle and consists of four rings (L,P,S, and M) mounted on a central rod.

Its subcellular location is the periplasm. It is found in the bacterial flagellum basal body. Assembles around the rod to form the L-ring and probably protects the motor/basal body from shearing forces during rotation. The polypeptide is Flagellar P-ring protein (Shigella dysenteriae serotype 1 (strain Sd197)).